Reading from the N-terminus, the 390-residue chain is uncharacterized protein (390 aa).

Transmembrane regions (helical) follow at residues 4–24 (IWLFFSVMFVIGTDTFLLSPL), 40–60 (GWMVSAYALGYALFAFIAGPI), 68–88 (TVMLWGLAGFIVSTFLCGIAP), 98–118 (FAAGVSAAFVTPQIWASIPVI), 130–150 (IATAGLAASQMLGLPIGGFLA), 159–179 (FVLSACSLILLLILAAVMPGI), 205–225 (VILLAYFLFQTGNFASFSFLG), 236–256 (VSQIGAAMLVLGLGNMLGSLI), 273–293 (GMLLMGALYFALPFFPNLFLV), 295–315 (AGFFLTFFTAGIIFPLMMGVF), 329–349 (LSNAAMYAGTTVGTSIAGFLY), and 356–376 (GAVTGFTAILFILSMTLYQTI).

Belongs to the major facilitator superfamily.

It is found in the cell membrane. This is an uncharacterized protein from Bacillus subtilis (strain 168).